The following is a 460-amino-acid chain: MGTIHLFRKPQRSFFGKLLQEFRLVAADRRSWKILLFGAINVLCTGFLLMWCSSTNSIALTAYTYLTIFDLFSLITCLISYWVMMRKPSPVYSFGFERLEVLAVFASTVLAQLGALFILKESAERFLEQPEIHTGRLLVGTFVALSFNLFTMLSIRNKPFAYVSEAASTSWLQEHVADLSRSLCGLIPGLSSIFLPRMNPFVLIDLAGAFALCITYMLIEINNYFAVDTASAIAIALMTFGTMYPMSVYSGKVLLQTTPPHVIGQLDKLIREVSTLDGVLEVRNEHFWTLGFGSLAGSVHVRIRRDANEQMVLAHVSNRLCTLVSTLTVQIFKDDWIRPALSSGPVAPNVLNFSDHHVIPMPLLKNVDERTPVTSTPAKPSSPPPEFSFNTPGKNVSPVILLNTQTRPYSLGLNRGHTPYSSVFSQGLAFPGVGAGQGLRPTFPHIPSRYGINRMGQPRP.

Topologically, residues 1-33 (MGTIHLFRKPQRSFFGKLLQEFRLVAADRRSWK) are cytoplasmic. A helical membrane pass occupies residues 34 to 54 (ILLFGAINVLCTGFLLMWCSS). The Extracellular segment spans residues 55 to 64 (TNSIALTAYT). A helical membrane pass occupies residues 65–85 (YLTIFDLFSLITCLISYWVMM). Residues 86-98 (RKPSPVYSFGFER) lie on the Cytoplasmic side of the membrane. A helical transmembrane segment spans residues 99 to 119 (LEVLAVFASTVLAQLGALFIL). Over 120–134 (KESAERFLEQPEIHT) the chain is Extracellular. Residues 135–155 (GRLLVGTFVALSFNLFTMLSI) form a helical membrane-spanning segment. Residues 156-200 (RNKPFAYVSEAASTSWLQEHVADLSRSLCGLIPGLSSIFLPRMNP) lie on the Cytoplasmic side of the membrane. Residues 201–221 (FVLIDLAGAFALCITYMLIEI) form a helical membrane-spanning segment. Residues 222 to 223 (NN) lie on the Extracellular side of the membrane. Residues 224 to 244 (YFAVDTASAIAIALMTFGTMY) form a helical membrane-spanning segment. Residues 245 to 460 (PMSVYSGKVL…GINRMGQPRP (216 aa)) are Cytoplasmic-facing. The segment at 371-390 (TPVTSTPAKPSSPPPEFSFN) is disordered.

The protein belongs to the cation diffusion facilitator (CDF) transporter (TC 2.A.4) family. SLC30A subfamily. As to quaternary structure, heterodimer with SLC30A5; form a functional zinc ion transmembrane transporter. As to expression, expressed in brain and liver, and to a lower extent also in lung. Highly expressed in brain (at protein level).

Its subcellular location is the golgi apparatus. It localises to the trans-Golgi network membrane. Functionally, has probably no intrinsic transporter activity but together with SLC30A5 forms a functional zinc ion:proton antiporter heterodimer, mediating zinc entry into the lumen of organelles along the secretory pathway. As part of that zinc ion:proton antiporter, contributes to zinc ion homeostasis within the early secretory pathway and regulates the activation and folding of enzymes like alkaline phosphatases and enzymes involved in phosphatidylinositol glycan anchor biosynthesis. The protein is Zinc transporter 6 (Slc30a6) of Mus musculus (Mouse).